Consider the following 532-residue polypeptide: BTB/POZ domain-containing protein 3 (532 aa).

The segment at 23 to 54 is disordered; sequence KNRSKKSSKKTNTGGGGGGSSSSSSSSSNSKL. Residues 43 to 53 show a composition bias toward low complexity; the sequence is SSSSSSSSNSK. Residues 130 to 200 enclose the BTB domain; it reads ADVHFVVGPP…IYCDEIDLAA (71 aa). Positions 245–310 constitute a BACK domain; the sequence is FEEPDLTQRC…NWAEVECQRQ (66 aa).

Expressed in visual cortex. Expressed in visual cortex layer IV neurons.

It is found in the cytoplasm. Its subcellular location is the cytosol. It localises to the nucleus. Its function is as follows. Acts as a key regulator of dendritic field orientation during development of sensory cortex. Also directs dendrites toward active axon terminals when ectopically expressed. The polypeptide is BTB/POZ domain-containing protein 3 (BTBD3) (Mustela putorius furo (European domestic ferret)).